Reading from the N-terminus, the 341-residue chain is MGLTYKDSGVDKEKGYEEVQIIKEIVKKTHGKEVLTGIGGFAGLFKPELTDMKEPVLVSGTDGVGTKIKLAMELDKHDTVGIDLVAMCVNDVLCQGAKPLFFLDYIATGSLKPAKMADLVRGVAEGCSQSECALIGGETAEMPGLYKENDYDLAGFAVGIVDRDKIIDGSGIKEGDVAISLSSSGVHSNGFSLVRAALDMANVKLSDKFEDTTVGERLLVPTRIYEKEISALLKEVEIKGIAHITGGGLYENVPRMLPENIGIEFDIKESEIDSVFKAIQKWGNVETKEMFSTFNMGIGMVVVVDAKDVDKSLEILQKIDPKAKQCGVCKKTETSVKINLK.

It belongs to the AIR synthase family.

The protein localises to the cytoplasm. It carries out the reaction 2-formamido-N(1)-(5-O-phospho-beta-D-ribosyl)acetamidine + ATP = 5-amino-1-(5-phospho-beta-D-ribosyl)imidazole + ADP + phosphate + H(+). The protein operates within purine metabolism; IMP biosynthesis via de novo pathway; 5-amino-1-(5-phospho-D-ribosyl)imidazole from N(2)-formyl-N(1)-(5-phospho-D-ribosyl)glycinamide: step 2/2. The sequence is that of Phosphoribosylformylglycinamidine cyclo-ligase from Finegoldia magna (strain ATCC 29328 / DSM 20472 / WAL 2508) (Peptostreptococcus magnus).